The chain runs to 158 residues: MQGRLSAWLAKHQLAHRPLGFDYQGIEILQIRPQDWPSIAVALYVYGFNYLRSQCAYDVTPGGGLASVYHLTKVQDDADQPEEVCIKIFVSREDPRIPSVFWIWKSSDFQERESYDMFGIIYESHPRLKRILMPESWIGWPLRKDYIVPNFYELQDAY.

The protein belongs to the complex I 30 kDa subunit family. In terms of assembly, NDH is composed of at least 16 different subunits, 5 of which are encoded in the nucleus.

The protein resides in the plastid. The protein localises to the chloroplast thylakoid membrane. It catalyses the reaction a plastoquinone + NADH + (n+1) H(+)(in) = a plastoquinol + NAD(+) + n H(+)(out). The enzyme catalyses a plastoquinone + NADPH + (n+1) H(+)(in) = a plastoquinol + NADP(+) + n H(+)(out). In terms of biological role, NDH shuttles electrons from NAD(P)H:plastoquinone, via FMN and iron-sulfur (Fe-S) centers, to quinones in the photosynthetic chain and possibly in a chloroplast respiratory chain. The immediate electron acceptor for the enzyme in this species is believed to be plastoquinone. Couples the redox reaction to proton translocation, and thus conserves the redox energy in a proton gradient. This Angiopteris evecta (Mule's foot fern) protein is NAD(P)H-quinone oxidoreductase subunit J, chloroplastic.